The sequence spans 299 residues: Transcription termination/antitermination protein NusG (299 aa).

The interval 30-96 (DPDEAELADA…APVEPAEPVD (67 aa)) is disordered. 2 consecutive repeat copies span residues 46-49 (EEAA) and 70-73 (EEAA). Positions 46–87 (EEAALHVESDEDEDEADVEVDAAVEEAADDAEVAEEEAEEAA) are 4 X 4 AA repeats of E-E-A-A. Over residues 54–87 (SDEDEDEADVEVDAAVEEAADDAEVAEEEAEEAA) the composition is skewed to acidic residues. Residues 80 to 83 (EEEA) form a 3; approximate repeat. Copy 4 of the repeat occupies 84 to 87 (EEAA). Positions 248-276 (VGDSVTVTDGPFATLQATINEINPDSKKV) constitute a KOW domain.

Belongs to the NusG family. Post-translationally, the N-terminus is blocked.

Participates in transcription elongation, termination and antitermination. The sequence is that of Transcription termination/antitermination protein NusG from Streptomyces virginiae (Streptomyces cinnamonensis).